We begin with the raw amino-acid sequence, 670 residues long: Polar flagellar hook-associated protein 2 (670 aa).

The interval 226–300 is disordered; that stretch reads PLQAPQQPDQ…RSSLRPEERI (75 aa). Positions 257-266 are enriched in acidic residues; it reads AQDDAQDDAS. The span at 272–283 shows a compositional bias: low complexity; the sequence is AAGAEAAKAGQE. Basic and acidic residues predominate over residues 284 to 300; sequence AIDKANQRSSLRPEERI. The stretch at 342 to 428 forms a coiled coil; that stretch reads GTLTDSYVTT…AQSSFEEYLG (87 aa).

The protein belongs to the FliD family. In terms of assembly, homopentamer.

Its subcellular location is the secreted. It localises to the bacterial flagellum. Its function is as follows. Required for the morphogenesis and for the elongation of the flagellar filament by facilitating polymerization of the flagellin monomers at the tip of growing filament. Forms a capping structure, which prevents flagellin subunits (transported through the central channel of the flagellum) from leaking out without polymerization at the distal end. Important for swimming motility. The sequence is that of Polar flagellar hook-associated protein 2 (fliDP) from Vibrio parahaemolyticus serotype O3:K6 (strain RIMD 2210633).